We begin with the raw amino-acid sequence, 389 residues long: S-adenosylmethionine synthase (389 aa).

An ATP-binding site is contributed by H16. Mg(2+) is bound at residue D18. Position 44 (E44) interacts with K(+). E57 and Q100 together coordinate L-methionine. The interval 100–110 (QSPDIAQGVDE) is flexible loop. ATP-binding positions include 167-169 (DAK), 233-234 (RF), D242, 248-249 (RK), A265, and K269. An L-methionine-binding site is contributed by D242. An L-methionine-binding site is contributed by K273.

It belongs to the AdoMet synthase family. As to quaternary structure, homotetramer; dimer of dimers. Mg(2+) serves as cofactor. K(+) is required as a cofactor.

It is found in the cytoplasm. The enzyme catalyses L-methionine + ATP + H2O = S-adenosyl-L-methionine + phosphate + diphosphate. Its pathway is amino-acid biosynthesis; S-adenosyl-L-methionine biosynthesis; S-adenosyl-L-methionine from L-methionine: step 1/1. In terms of biological role, catalyzes the formation of S-adenosylmethionine (AdoMet) from methionine and ATP. The overall synthetic reaction is composed of two sequential steps, AdoMet formation and the subsequent tripolyphosphate hydrolysis which occurs prior to release of AdoMet from the enzyme. This Acidithiobacillus ferrooxidans (strain ATCC 23270 / DSM 14882 / CIP 104768 / NCIMB 8455) (Ferrobacillus ferrooxidans (strain ATCC 23270)) protein is S-adenosylmethionine synthase.